Here is a 238-residue protein sequence, read N- to C-terminus: 7-cyano-7-deazaguanine synthase (238 aa).

Phenylalanine 12 to leucine 22 serves as a coordination point for ATP. Residues cysteine 200, cysteine 215, cysteine 218, and cysteine 221 each contribute to the Zn(2+) site.

Belongs to the QueC family. Zn(2+) is required as a cofactor.

It catalyses the reaction 7-carboxy-7-deazaguanine + NH4(+) + ATP = 7-cyano-7-deazaguanine + ADP + phosphate + H2O + H(+). The protein operates within purine metabolism; 7-cyano-7-deazaguanine biosynthesis. Its function is as follows. Catalyzes the ATP-dependent conversion of 7-carboxy-7-deazaguanine (CDG) to 7-cyano-7-deazaguanine (preQ(0)). This is 7-cyano-7-deazaguanine synthase from Lawsonia intracellularis (strain PHE/MN1-00).